A 372-amino-acid chain; its full sequence is Glutamate 5-kinase (372 aa).

Lys-14 contacts ATP. Residues Ser-54, Asp-141, and Asn-153 each contribute to the substrate site. 173–174 (TD) lines the ATP pocket. The PUA domain maps to 280–358 (RGHVVIDAGA…GEIETVLGYM (79 aa)).

The protein belongs to the glutamate 5-kinase family.

The protein resides in the cytoplasm. It carries out the reaction L-glutamate + ATP = L-glutamyl 5-phosphate + ADP. It participates in amino-acid biosynthesis; L-proline biosynthesis; L-glutamate 5-semialdehyde from L-glutamate: step 1/2. Catalyzes the transfer of a phosphate group to glutamate to form L-glutamate 5-phosphate. The chain is Glutamate 5-kinase from Burkholderia orbicola (strain AU 1054).